The sequence spans 511 residues: S-layer protein B (511 aa).

A signal peptide spans 1–24 (MVKYMNLIVLGMLMFGVFVTLSLG). Residues 358-392 (IQRLQSEVSVLESEVDQLKVEIQSLNETLTLQASE) are a coiled coil. The helical transmembrane segment at 487-507 (GGIILGVIALIIAIVAVVLVF) threads the bilayer.

It belongs to the Sulfolobales SlaB family. As to quaternary structure, the mushroom-shaped unit cells of the Sulfolobales' S-layers may consist of three SlaB subunits and six SlaA subunits.

It is found in the secreted. The protein localises to the cell wall. Its subcellular location is the S-layer. It localises to the cell membrane. In terms of biological role, S-layer small protein. May anchor the complex to the cell membrane. This Acidianus ambivalens (Desulfurolobus ambivalens) protein is S-layer protein B.